We begin with the raw amino-acid sequence, 111 residues long: Large ribosomal subunit protein uL22 (111 aa).

The protein belongs to the universal ribosomal protein uL22 family. Part of the 50S ribosomal subunit.

This protein binds specifically to 23S rRNA; its binding is stimulated by other ribosomal proteins, e.g. L4, L17, and L20. It is important during the early stages of 50S assembly. It makes multiple contacts with different domains of the 23S rRNA in the assembled 50S subunit and ribosome. Its function is as follows. The globular domain of the protein is located near the polypeptide exit tunnel on the outside of the subunit, while an extended beta-hairpin is found that lines the wall of the exit tunnel in the center of the 70S ribosome. In Chlamydia trachomatis serovar L2 (strain ATCC VR-902B / DSM 19102 / 434/Bu), this protein is Large ribosomal subunit protein uL22.